The sequence spans 169 residues: MTATDYHCYSEFFQRQVLACFLTNPHYGSLINADGHAEVWTDWNDMSKFFQYGWRCNTNEDAYSNRTLMGNWNQERYDLKNIVQPKPLPSQFGHYFETTYDTSYNNRRPLSTHRFKREPHWFPGHQPELVPPPYKCTEKSTYMTSYSKPQTDHHSVCVWNPSNCQFQSP.

Mn regions lie at residues 98–109 and 139–149; these read TTYDTSYNNRRP and KSTYMTSYSKP.

It belongs to the CFAP68 family. In terms of assembly, microtubule inner protein component of sperm flagellar doublet microtubules.

It localises to the cytoplasm. The protein resides in the cytoskeleton. It is found in the cilium axoneme. Its subcellular location is the flagellum axoneme. The protein localises to the nucleus. It localises to the cell projection. The protein resides in the cilium. Microtubule inner protein (MIP) part of the dynein-decorated doublet microtubules (DMTs) in cilia axoneme, which is required for motile cilia beating. This is Cilia- and flagella-associated protein 68 (CFAP68) from Bos taurus (Bovine).